We begin with the raw amino-acid sequence, 225 residues long: MASPSRQAPLGGSGLLHGSRARSYGSLVQSACSPVRERRLEHQLAPGDTLAGLALKYGVTMEQIKRANRLYTNDSIFLKKTLHIPILTEPRDLFNGLDSEEEKDGEEAVQPSKDEVRPHSAERKKRERGLGHANGEPLPTAGQEPARHDLSASDFLKKLDSQISLSKKAAAQKLKKGESGIPGEDSSLHLSSPRMQQRAVLGPVPLTQTSRTRTLRDQEDEIFKL.

A phosphoserine mark is found at serine 23 and serine 33. The LysM domain occupies 40–84; sequence LEHQLAPGDTLAGLALKYGVTMEQIKRANRLYTNDSIFLKKTLHI. The tract at residues 97–153 is disordered; that stretch reads LDSEEEKDGEEAVQPSKDEVRPHSAERKKRERGLGHANGEPLPTAGQEPARHDLSAS. Positions 98–107 are enriched in acidic residues; sequence DSEEEKDGEE. Phosphoserine is present on serine 99. The segment covering 112–121 has biased composition (basic and acidic residues); sequence SKDEVRPHSA. Residues serine 164, serine 179, serine 192, and serine 210 each carry the phosphoserine modification. Residues 170–225 are disordered; it reads AAQKLKKGESGIPGEDSSLHLSSPRMQQRAVLGPVPLTQTSRTRTLRDQEDEIFKL. Basic and acidic residues predominate over residues 214–225; sequence TLRDQEDEIFKL.

The protein is LysM and putative peptidoglycan-binding domain-containing protein 1 (LYSMD1) of Bos taurus (Bovine).